Here is a 418-residue protein sequence, read N- to C-terminus: Sprouty-related, EVH1 domain-containing protein 2 (418 aa).

The WH1 domain occupies 5 to 122 (THPDDDSYIV…RGVRKAIEDL (118 aa)). The disordered stretch occupies residues 127-171 (TTSSSTIHNEAELGDDDVFTTATDSSSNSSQKREQPTRTISSPTS). Polar residues predominate over residues 146 to 156 (TTATDSSSNSS). The 57-residue stretch at 201–257 (PYRQVSFPDDDEEIVRINPREKIWMTGYEDYRHAPVRGKYPDPSEDADSSYVRFAKG) folds into the KBD domain. The residue at position 206 (serine 206) is a Phosphoserine. Phosphotyrosine occurs at positions 228 and 231. Residues 275-302 (GLGEDPKGRGGSVIKTQPSRGKSRRRKE) form a disordered region. One can recognise an SPR domain in the interval 308–416 (RCVYCRDMFN…CRCCGGKHKA (109 aa)).

Homodimer and heterodimer. Able to interact with SPRED1 to form heterodimers. Interacts with RAS. May interact with ZDHHC13 (via ANK repeats) and ZDHHC17 (via ANK repeats). Interacts with TESK1. Interacts with NF1. Post-translationally, phosphorylated on serine and threonine residues. Phosphorylated on tyrosine. Phosphorylation of Tyr-228 and Tyr-231 are required for ubiquitination. Ubiquitinated; leading to degradation by the proteasome. In terms of tissue distribution, expressed in liver, skin, small intestine, salivary gland and prostate.

Its subcellular location is the cell membrane. It is found in the cytoplasmic vesicle. The protein resides in the secretory vesicle membrane. It localises to the cytoplasm. Its function is as follows. Negatively regulates Ras signaling pathways and downstream activation of MAP kinases. Recruits and translocates NF1 to the cell membrane, thereby enabling NF1-dependent hydrolysis of active GTP-bound Ras to inactive GDP-bound Ras. Inhibits fibroblast growth factor (FGF)-induced retinal lens fiber differentiation, probably by inhibiting FGF-mediated phosphorylation of ERK1/2. Inhibits TGFB-induced epithelial-to-mesenchymal transition in lens epithelial cells. The chain is Sprouty-related, EVH1 domain-containing protein 2 (SPRED2) from Homo sapiens (Human).